A 416-amino-acid polypeptide reads, in one-letter code: STAM-binding protein-like (416 aa).

Residues 214–244 are disordered; the sequence is SYGTVQPHPPAVDRSLKPSSYGSNSSGVTSD. Over residues 230 to 243 the composition is skewed to low complexity; the sequence is KPSSYGSNSSGVTS. An MPN domain is found at 249–380; it reads VKIPRDVCCK…LTDYGMKEIG (132 aa). 7 residues coordinate Zn(2+): histidine 327, histidine 329, aspartate 340, histidine 342, cysteine 382, histidine 388, and histidine 390. A JAMM motif motif is present at residues 327–340; that stretch reads HTHPTQTAFLSSVD.

The protein belongs to the peptidase M67C family. Zn(2+) is required as a cofactor.

Zinc metalloprotease that specifically cleaves 'Lys-63'-linked polyubiquitin chains. Does not cleave 'Lys-48'-linked polyubiquitin chains. Functions at the endosome and is able to oppose the ubiquitin-dependent sorting of receptors to lysosomes. The sequence is that of STAM-binding protein-like (stambp) from Xenopus laevis (African clawed frog).